Reading from the N-terminus, the 937-residue chain is Coiled-coil domain-containing protein 39 (937 aa).

Coiled coils occupy residues 16 to 137 (AIPV…CQMN), 165 to 339 (QQDD…KKDI), 365 to 615 (EKTL…SQIR), and 664 to 816 (VIKA…LKQT). A disordered region spans residues 866–937 (LPTARGPSSR…NIPKEKKLSK (72 aa)). A compositionally biased stretch (low complexity) spans 873 to 887 (SSRSSSQSSSLSSFR). Phosphoserine occurs at positions 888 and 896. Residues 915–928 (NDSSRSASSGSNSN) are compositionally biased toward low complexity.

This sequence belongs to the CCDC39 family. As to expression, strongly expressed in tissues rich in ciliated cells. Expressed in olfactory and vomeronasal sensory neurons and the respiratory epithelium. Expressed in node cells carrying motile cilia, in upper and lower airways, and in ependymal and choroid plexus cells.

It is found in the cytoplasm. The protein resides in the cytoskeleton. It localises to the cilium axoneme. Functionally, required for assembly of dynein regulatory complex (DRC) and inner dynein arm (IDA) complexes, which are responsible for ciliary beat regulation, thereby playing a central role in motility in cilia and flagella. Probably acts together with CCDC40 to form a molecular ruler that determines the 96 nanometer (nm) repeat length and arrangements of components in cilia and flagella. Not required for outer dynein arm complexes assembly. In Mus musculus (Mouse), this protein is Coiled-coil domain-containing protein 39.